Here is a 263-residue protein sequence, read N- to C-terminus: Ribonuclease HII (263 aa).

Residues 71–262 form the RNase H type-2 domain; the sequence is KAIAGIDEVG…VKSMCCDSTN (192 aa). The a divalent metal cation site is built by aspartate 77, glutamate 78, and aspartate 172.

Belongs to the RNase HII family. Mn(2+) serves as cofactor. The cofactor is Mg(2+).

Its subcellular location is the cytoplasm. The catalysed reaction is Endonucleolytic cleavage to 5'-phosphomonoester.. In terms of biological role, endonuclease that specifically degrades the RNA of RNA-DNA hybrids. The polypeptide is Ribonuclease HII (Streptococcus pyogenes serotype M1).